The chain runs to 776 residues: A-type ATP synthase subunit A (776 aa).

Belongs to the ATPase alpha/beta chains family. As to quaternary structure, has multiple subunits with at least A(3), B(3), C, D, E, F, H, I and proteolipid K(x). This protein undergoes a protein self splicing that involves a post-translational excision of the VDE intervening region (intein) followed by peptide ligation.

Its subcellular location is the cell membrane. It carries out the reaction ATP + H2O + 4 H(+)(in) = ADP + phosphate + 5 H(+)(out). In terms of biological role, component of the A-type ATP synthase that produces ATP from ADP in the presence of a proton gradient across the membrane. The A chain is the catalytic subunit. The protein is A-type ATP synthase subunit A of Thermoplasma volcanium (strain ATCC 51530 / DSM 4299 / JCM 9571 / NBRC 15438 / GSS1).